A 499-amino-acid polypeptide reads, in one-letter code: Patatin-like protein 6 (499 aa).

Residues 111 to 314 form the PNPLA domain; it reads LSIDSGGMRG…AMSNPTAAAI (204 aa). The GGXR signature appears at 116–119; that stretch reads GGMR. Residue Ser-155 is the Nucleophile of the active site. Asp-301 serves as the catalytic Proton acceptor. A DGA/G motif is present at residues 301 to 303; the sequence is DGG.

The protein belongs to the patatin family. In terms of tissue distribution, highly expressed in siliques and at lower levels in roots and flowers.

Its function is as follows. Possesses non-specific lipolytic acyl hydrolase (LAH) activity. Hydrolyzes phospholipids as well as galactolipids. May play a role in disease resistance. The protein is Patatin-like protein 6 (PLP6) of Arabidopsis thaliana (Mouse-ear cress).